The primary structure comprises 145 residues: Protein X (145 aa).

Residues 68-117 (PCALRFTSARRMETTVNAHQVLPKVLHKRTLGLSAMSTTDLEAYFKDCVF) are mitochondrial targeting sequence.

It belongs to the orthohepadnavirus protein X family. May form homodimer. May interact with host CEBPA, CFLAR, CREB1, DDB1, E4F1, HBXIP, HSPD1/HSP60, NFKBIA, POLR2E and SMAD4. Interacts with host SMC5-SMC6 complex and induces its degradation. Interacts with host TRPC4AP; leading to prevent ubiquitination of TRPC4AP. Interacts with host PLSCR1; this interaction promotes ubiquitination and degradation of HBx and impairs HBx-mediated cell proliferation. Post-translationally, a fraction may be phosphorylated in insect cells and HepG2 cells, a human hepatoblastoma cell line. Phosphorylated in vitro by host protein kinase C or mitogen-activated protein kinase. N-acetylated in insect cells.

It localises to the host cytoplasm. The protein localises to the host nucleus. Its subcellular location is the host mitochondrion. Multifunctional protein that plays a role in silencing host antiviral defenses and promoting viral transcription. Does not seem to be essential for HBV infection. May be directly involved in development of cirrhosis and liver cancer (hepatocellular carcinoma). Most of cytosolic activities involve modulation of cytosolic calcium. The effect on apoptosis is controversial depending on the cell types in which the studies have been conducted. May induce apoptosis by localizing in mitochondria and causing loss of mitochondrial membrane potential. May also modulate apoptosis by binding host CFLAR, a key regulator of the death-inducing signaling complex (DISC). Promotes viral transcription by using the host E3 ubiquitin ligase DDB1 to target the SMC5-SMC6 complex to proteasomal degradation. This host complex would otherwise bind to viral episomal DNA, and prevents its transcription. Moderately stimulates transcription of many different viral and cellular transcription elements. Promoters and enhancers stimulated by HBx contain DNA binding sites for NF-kappa-B, AP-1, AP-2, c-EBP, ATF/CREB, or the calcium-activated factor NF-AT. The chain is Protein X from Homo sapiens (Human).